We begin with the raw amino-acid sequence, 307 residues long: Oligopeptide transport ATP-binding protein OppF (307 aa).

Positions 6–251 (VEVKDLEISF…PIHPYTQSLL (246 aa)) constitute an ABC transporter domain. Residue 42–49 (GESGSGKT) coordinates ATP.

The protein belongs to the ABC transporter superfamily. As to quaternary structure, the complex is composed of two ATP-binding proteins (OppD and OppF), two transmembrane proteins (OppB and OppC) and a solute-binding protein (OppA).

It localises to the cell membrane. The catalysed reaction is a [peptide](out) + ATP + H2O = a [peptide](in) + ADP + phosphate + H(+). Part of the ABC transporter complex OppABCDF involved in the uptake of oligopeptides. Probably responsible for energy coupling to the transport system. The protein is Oligopeptide transport ATP-binding protein OppF (oppF) of Streptococcus pyogenes serotype M1.